Consider the following 65-residue polypeptide: Large ribosomal subunit protein uL29 (65 aa).

It belongs to the universal ribosomal protein uL29 family.

The chain is Large ribosomal subunit protein uL29 from Delftia acidovorans (strain DSM 14801 / SPH-1).